A 341-amino-acid chain; its full sequence is C2 calcium-dependent domain-containing protein 4D (341 aa).

The segment covering 56–71 has biased composition (basic and acidic residues); the sequence is RLRDPRGAEGRVDRNP. 2 disordered regions span residues 56–75 and 134–176; these read RLRDPRGAEGRVDRNPGGRN and CRAP…PYAP. Over residues 139-149 the composition is skewed to low complexity; the sequence is SDTASSPDSSP. Residues 205–331 form the C2 domain; it reads RGGQLRLSTE…PPLAGGLGPG (127 aa).

This chain is C2 calcium-dependent domain-containing protein 4D (C2cd4d), found in Mus musculus (Mouse).